A 92-amino-acid polypeptide reads, in one-letter code: U21-hexatoxin-Hi1a (92 aa).

The N-terminal stretch at 1-19 (MKTILSMLIFVALFAAIVG) is a signal peptide. 4 disulfide bridges follow: cysteine 41/cysteine 55, cysteine 48/cysteine 67, cysteine 54/cysteine 82, and cysteine 85/cysteine 92.

The protein belongs to the neurotoxin 21 family. Expressed by the venom gland.

It localises to the secreted. In terms of biological role, potent insecticidal toxin with probable ion channel impairing activity. In vivo, reversibly paralyzes all flies within 30 minutes, even at low dose (0.3 nmol/g). This chain is U21-hexatoxin-Hi1a, found in Hadronyche infensa (Fraser island funnel-web spider).